The sequence spans 139 residues: Thiosulfate:glutathione sulfurtransferase (139 aa).

S26 is modified (phosphoserine). The Rhodanese domain maps to 37–138 (HDPNVVLVDV…WVSHGGDKLD (102 aa)). C98 serves as the catalytic Cysteine persulfide intermediate.

Its subcellular location is the mitochondrion. The enzyme catalyses thiosulfate + glutathione = S-sulfanylglutathione + sulfite + H(+). With respect to regulation, GSS(-) is a potent inhibitor of RDL1, since the presence of the sulfur dioxygenase strongly increases the RDL1 catalytic activity. Functionally, thiosulfate:glutathione sulfurtransferase (TST) required to produce S-sulfanylglutathione (GSS(-)), a central intermediate in hydrogen sulfide metabolism. Provides the link between the first step in H(2)S metabolism performed by the sulfide:quinone oxidoreductase (SQOR) which catalyzes the conversion of H(2)S to thiosulfate, and the sulfur dioxygenase (SDO) which uses GSS(-) as substrate. The thermodynamic coupling of the irreversible SDO and reversible TST reactions provides a model for the physiologically relevant reaction with thiosulfate as the sulfane donor. The sequence is that of Thiosulfate:glutathione sulfurtransferase (RDL1) from Saccharomyces cerevisiae (strain ATCC 204508 / S288c) (Baker's yeast).